Consider the following 391-residue polypeptide: Oxytocin receptor (391 aa).

The Extracellular segment spans residues 1-38; that stretch reads MEGAFAANWSAEAVNGSAAPPGTEGNRTAGPPQRNEAL. Asn8, Asn15, and Asn26 each carry an N-linked (GlcNAc...) asparagine glycan. Residues 39 to 63 traverse the membrane as a helical segment; the sequence is ARVEVAVLCLILFLALSGNACVLLA. At 64–74 the chain is on the cytoplasmic side; that stretch reads LRTTRHKHSRL. A helical membrane pass occupies residues 75–97; it reads FFFMKHLSIADLVVAVFQVLPQL. At 98–113 the chain is on the extracellular side; sequence LWDITFRFYGPDLLCR. Cys112 and Cys187 are joined by a disulfide. Residues 114-135 form a helical membrane-spanning segment; the sequence is LVKYLQVVGMFASTYLLLLMSL. Over 136–154 the chain is Cytoplasmic; it reads DRCLAICQPLRSLSRRTDR. The chain crosses the membrane as a helical span at residues 155 to 175; the sequence is LAVLVTWLGCLVASAPQVHIF. At 176–202 the chain is on the extracellular side; the sequence is SLREVADGVFDCWAVFIQPWGPKAYIT. A helical membrane pass occupies residues 203 to 225; it reads WITLAVYIVPVIVLATCYGLISF. At 226–277 the chain is on the cytoplasmic side; sequence KIWQNLRLKTAAAAAEAAAGAEGEAADWAGRAILARVSNVKLISKAKIRTVK. Residues 278 to 296 traverse the membrane as a helical segment; sequence MTFIVVLAFIVCWTPFFFV. Residues 297–311 are Extracellular-facing; it reads QMWSVWDADAPKEAS. A helical membrane pass occupies residues 312–334; that stretch reads PFIIAMLLASLNSCCNPWIYMLF. Residues 335 to 391 are Cytoplasmic-facing; sequence TGHLFQELVQRFLCCSFRRLKGSRPGETSVSKKSNSSTFVLSQYSSSQRRCSQPSTL. 2 positions are modified to phosphoserine: Ser368 and Ser370.

The protein belongs to the G-protein coupled receptor 1 family. Vasopressin/oxytocin receptor subfamily.

The protein resides in the cell membrane. In terms of biological role, receptor for oxytocin. The activity of this receptor is mediated by G proteins which activate a phosphatidylinositol-calcium second messenger system. The polypeptide is Oxytocin receptor (OXTR) (Bos taurus (Bovine)).